A 460-amino-acid chain; its full sequence is Nuclear transport factor 2 (460 aa).

The region spanning 15-131 is the NTF2 domain; sequence VGRAFVEQYY…YFVLNDVFRF (117 aa). Disordered regions lie at residues 207-226, 238-289, and 361-460; these read EPPT…GDAP, KSSP…VDVE, and RQAV…GGSS. The 78-residue stretch at 293 to 370 folds into the RRM domain; sequence HSIYVRNLPF…RQAVVEEKKT (78 aa). Residues 373-382 are compositionally biased toward gly residues; it reads RGGGNNGGSR. Low complexity predominate over residues 383–394; sequence GRYFSGRGSFRN. Composition is skewed to gly residues over residues 399–416 and 450–460; these read GGRG…GGEF and GRGGARGGGSS.

Interacts with MBD6.

It is found in the cytoplasm. The protein localises to the nucleus. In terms of biological role, involved in RNA-directed DNA methylation (RdDM). The protein is Nuclear transport factor 2 of Arabidopsis thaliana (Mouse-ear cress).